The primary structure comprises 518 residues: Xylose import ATP-binding protein XylG (518 aa).

ABC transporter domains follow at residues 6–245 (LQMN…VGRE) and 262–507 (FEAR…LSHS). An ATP-binding site is contributed by 38–45 (GENGAGKS).

It belongs to the ABC transporter superfamily. Xylose importer (TC 3.A.1.2.4) family. As to quaternary structure, the complex is composed of two ATP-binding proteins (XylG), two transmembrane proteins (XylH) and a solute-binding protein (XylF).

It is found in the cell inner membrane. It catalyses the reaction D-xylose(out) + ATP + H2O = D-xylose(in) + ADP + phosphate + H(+). In terms of biological role, part of the ABC transporter complex XylFGH involved in xylose import. Responsible for energy coupling to the transport system. This is Xylose import ATP-binding protein XylG from Pseudomonas syringae pv. syringae (strain B728a).